Reading from the N-terminus, the 380-residue chain is Chorismate synthase (380 aa).

Arg-48 provides a ligand contact to NADP(+). FMN contacts are provided by residues His-126 to Ser-128, Gly-300, Lys-315 to Ser-319, and Arg-342.

The protein belongs to the chorismate synthase family. In terms of assembly, homotetramer. Requires FMNH2 as cofactor.

It catalyses the reaction 5-O-(1-carboxyvinyl)-3-phosphoshikimate = chorismate + phosphate. It functions in the pathway metabolic intermediate biosynthesis; chorismate biosynthesis; chorismate from D-erythrose 4-phosphate and phosphoenolpyruvate: step 7/7. Functionally, catalyzes the anti-1,4-elimination of the C-3 phosphate and the C-6 proR hydrogen from 5-enolpyruvylshikimate-3-phosphate (EPSP) to yield chorismate, which is the branch point compound that serves as the starting substrate for the three terminal pathways of aromatic amino acid biosynthesis. This reaction introduces a second double bond into the aromatic ring system. This Lancefieldella parvula (strain ATCC 33793 / DSM 20469 / CCUG 32760 / JCM 10300 / KCTC 3663 / VPI 0546 / 1246) (Atopobium parvulum) protein is Chorismate synthase.